Reading from the N-terminus, the 155-residue chain is Protein FAM201A (155 aa).

Residues 130-155 form a disordered region; it reads QDQGCGQHRPHSPRLVDIALPGGGWT.

The polypeptide is Protein FAM201A (FAM201A) (Homo sapiens (Human)).